The chain runs to 259 residues: Cysteine protease IpaJ (259 aa).

Catalysis depends on residues Cys64, His206, and Asp218.

Its subcellular location is the secreted. It is found in the host cytoplasm. In terms of biological role, virulence factor that eliminates N-myristoyl protein modifications in infected host cells. Acts as a cysteine protease that cleaves the peptide bond between N-myristoylated Gly-2 and Asn-3 of human ARF1, leading to the elimination of the myristoyl group and alteration of protein trafficking in host cell. Could also cleave an array of N-myristoylated host proteins involved in cellular growth, signal transduction, autophagasome maturation and organelle function. This Shigella flexneri protein is Cysteine protease IpaJ (ipaJ).